The primary structure comprises 98 residues: Sm-like protein LSM8 (98 aa).

Residues 2–78 enclose the Sm domain; it reads AATTGLETLV…IGVIGELDEE (77 aa).

The protein belongs to the snRNP Sm proteins family. As to quaternary structure, component of the heptameric LSM2-LSM8 complex that forms a seven-membered ring structure with a donut shape. The LSM subunits are arranged in the order LSM8, LSM2, LSM3, LSM6, LSM5, LSM7 and LSM4. LSM8 subunit interacts only with its two neighboring subunits, LSM2 and LSM4. Interacts with the prefoldin co-chaperone subunits PFD1, PFD2, PFD3, PFD4, PFD5 and PFD6. In terms of tissue distribution, expressed in roots, leaves, stems, flowers and siliques.

The protein resides in the nucleus. Its function is as follows. Component of the nuclear LSM2-LSM8 complex which is involved splicing nuclear mRNAs. LSM2-LSM8 binds directly to the U6 small nuclear RNAs (snRNAs). LSM8 is essential for the formation of the nuclear LSM2-LSM8 complex involved in the accurate splicing of selected development-related mRNAs through the stabilization of the spliceosomal U6 snRNA. Plays a critical role in the regulation of development-related gene expression. The chain is Sm-like protein LSM8 from Arabidopsis thaliana (Mouse-ear cress).